A 151-amino-acid chain; its full sequence is uncharacterized protein (151 aa).

The segment at 48-151 (RPPGWQPPVN…SKFDHTRKKF (104 aa)) is disordered. The segment covering 55-77 (PVNTGPTSPVSINASNAAPSNLK) has biased composition (polar residues). 2 stretches are compositionally biased toward low complexity: residues 85-105 (PRRL…RLPS) and 123-141 (KSPS…SLLR).

This is an uncharacterized protein from Schizosaccharomyces pombe (strain 972 / ATCC 24843) (Fission yeast).